We begin with the raw amino-acid sequence, 222 residues long: Putative serine proteinase inhibitor 2 homolog second part (222 aa).

The protein belongs to the serpin family. Poxviruses subfamily.

This chain is Putative serine proteinase inhibitor 2 homolog second part, found in Homo sapiens (Human).